Reading from the N-terminus, the 70-residue chain is Mu-agatoxin-Ao1a (70 aa).

Residues 1 to 20 (MKAIIFFCFLSVMVFIVAEA) form the signal peptide. The propeptide occupies 21–33 (SSLEALKIFEGER). Cystine bridges form between Cys35–Cys50, Cys42–Cys55, Cys49–Cys65, and Cys57–Cys63. At Asn69 the chain carries Asparagine amide.

It belongs to the neurotoxin 07 (Beta/delta-agtx) family. 04 (aga-5) subfamily. Expressed by the venom gland.

The protein resides in the secreted. Its function is as follows. Insecticidal neurotoxin that modulates the insect Nav channel (DmNaV1/tipE (para/tipE)) in a unique manner, with both the activation and inactivation processes being affected. The voltage dependence of activation is shifted toward more hyperpolarized potentials (analogous to site 4 toxins) and a non-inactivating persistent sodium current is induced (site 3-like action). Interestingly, both effects take place in a voltage-dependent manner, producing a bell-shaped curve between -80 and 0 mV. The polypeptide is Mu-agatoxin-Ao1a (Agelena orientalis (Funnel-web spider)).